We begin with the raw amino-acid sequence, 632 residues long: tRNA-guanine(15) transglycosylase (632 aa).

The active-site Nucleophile is the aspartate 86. Residues aspartate 121 and glycine 186 each coordinate substrate. In terms of domain architecture, PUA spans 553-628; the sequence is AMRVTVSKES…IAVKVHEGRD (76 aa).

This sequence belongs to the archaeosine tRNA-ribosyltransferase family. It depends on Zn(2+) as a cofactor.

It carries out the reaction guanosine(15) in tRNA + 7-cyano-7-deazaguanine = 7-cyano-7-carbaguanosine(15) in tRNA + guanine. Its pathway is tRNA modification; archaeosine-tRNA biosynthesis. Exchanges the guanine residue with 7-cyano-7-deazaguanine (preQ0) at position 15 in the dihydrouridine loop (D-loop) of archaeal tRNAs. The sequence is that of tRNA-guanine(15) transglycosylase from Thermoplasma acidophilum (strain ATCC 25905 / DSM 1728 / JCM 9062 / NBRC 15155 / AMRC-C165).